A 442-amino-acid chain; its full sequence is Ribosomal protein uS12 methylthiotransferase RimO (442 aa).

An MTTase N-terminal domain is found at 9 to 119 (PRIGFVSLGC…VLSHVHQYVP (111 aa)). Residues Cys18, Cys54, Cys83, Cys151, Cys155, and Cys158 each coordinate [4Fe-4S] cluster. A Radical SAM core domain is found at 137–375 (LTPRHYAYLK…QLQQAISTQR (239 aa)). The 66-residue stretch at 377–442 (QDKIGREVLV…DEYDLWGSRV (66 aa)) folds into the TRAM domain.

This sequence belongs to the methylthiotransferase family. RimO subfamily. Requires [4Fe-4S] cluster as cofactor.

The protein resides in the cytoplasm. It carries out the reaction L-aspartate(89)-[ribosomal protein uS12]-hydrogen + (sulfur carrier)-SH + AH2 + 2 S-adenosyl-L-methionine = 3-methylsulfanyl-L-aspartate(89)-[ribosomal protein uS12]-hydrogen + (sulfur carrier)-H + 5'-deoxyadenosine + L-methionine + A + S-adenosyl-L-homocysteine + 2 H(+). Its function is as follows. Catalyzes the methylthiolation of an aspartic acid residue of ribosomal protein uS12. The protein is Ribosomal protein uS12 methylthiotransferase RimO of Pectobacterium atrosepticum (strain SCRI 1043 / ATCC BAA-672) (Erwinia carotovora subsp. atroseptica).